Here is a 621-residue protein sequence, read N- to C-terminus: UvrABC system protein C (621 aa).

The GIY-YIG domain occupies 20–98; it reads MAPGVYCMYA…IKSLAPRYNV (79 aa). In terms of domain architecture, UVR spans 207–242; that stretch reads DLLAEELIQAMQVASEHLEFEQAARLRDLLTSLRSM.

Belongs to the UvrC family. In terms of assembly, interacts with UvrB in an incision complex.

The protein resides in the cytoplasm. Functionally, the UvrABC repair system catalyzes the recognition and processing of DNA lesions. UvrC both incises the 5' and 3' sides of the lesion. The N-terminal half is responsible for the 3' incision and the C-terminal half is responsible for the 5' incision. The polypeptide is UvrABC system protein C (Xylella fastidiosa (strain 9a5c)).